Reading from the N-terminus, the 223-residue chain is Adenylate kinase (223 aa).

10-15 (GSGKGT) serves as a coordination point for ATP. An NMP region spans residues 30–59 (ESGAIFREHIGGGTELGKQAKAFIERGDLV). Residues serine 31, arginine 36, 57–59 (DLV), 84–87 (GFPR), and glutamine 91 contribute to the AMP site. The segment at 125–164 (GRRLCKNDNNHPNNIFIDAIKPNGDVCRVCGGELSARSDD) is LID. Arginine 126 provides a ligand contact to ATP. The AMP site is built by arginine 161 and arginine 173. Glycine 209 provides a ligand contact to ATP.

The protein belongs to the adenylate kinase family. Monomer.

The protein localises to the cytoplasm. It carries out the reaction AMP + ATP = 2 ADP. It participates in purine metabolism; AMP biosynthesis via salvage pathway; AMP from ADP: step 1/1. Its function is as follows. Catalyzes the reversible transfer of the terminal phosphate group between ATP and AMP. Plays an important role in cellular energy homeostasis and in adenine nucleotide metabolism. The sequence is that of Adenylate kinase from Nitratidesulfovibrio vulgaris (strain ATCC 29579 / DSM 644 / CCUG 34227 / NCIMB 8303 / VKM B-1760 / Hildenborough) (Desulfovibrio vulgaris).